The following is a 492-amino-acid chain: NADH-quinone oxidoreductase subunit N (492 aa).

Helical transmembrane passes span 5 to 25, 37 to 57, 72 to 92, 104 to 124, 129 to 149, 164 to 184, 205 to 225, 239 to 259, 276 to 295, 302 to 322, 337 to 357, 380 to 400, 414 to 434, and 466 to 486; these read PMTA…AWLI, TYFI…IDAL, VVDP…AVSI, LYEG…LVMI, FLTL…AIAL, YVLG…LYGA, VVLL…MGAV, PTAM…AWGL, MLVI…GIVQ, LAYS…AGVV, MFYS…VMLL, FAFV…AVGF, GLTW…FYYL, and VAVL…LNAI.

This sequence belongs to the complex I subunit 2 family. In terms of assembly, NDH-1 is composed of 14 different subunits. Subunits NuoA, H, J, K, L, M, N constitute the membrane sector of the complex.

It localises to the cell inner membrane. It carries out the reaction a quinone + NADH + 5 H(+)(in) = a quinol + NAD(+) + 4 H(+)(out). Its function is as follows. NDH-1 shuttles electrons from NADH, via FMN and iron-sulfur (Fe-S) centers, to quinones in the respiratory chain. The immediate electron acceptor for the enzyme in this species is believed to be ubiquinone. Couples the redox reaction to proton translocation (for every two electrons transferred, four hydrogen ions are translocated across the cytoplasmic membrane), and thus conserves the redox energy in a proton gradient. The chain is NADH-quinone oxidoreductase subunit N from Paraburkholderia phymatum (strain DSM 17167 / CIP 108236 / LMG 21445 / STM815) (Burkholderia phymatum).